Here is a 204-residue protein sequence, read N- to C-terminus: Putative t-SNARE coiled-coil homology domain-containing protein L657 (204 aa).

T-SNARE coiled-coil homology domains lie at 9–71 and 140–202; these read SDYY…MDHV and DNSR…IKHT. Residues 159–181 adopt a coiled-coil conformation; that stretch reads VLEKQANDISNILDEQNNTLEII.

This chain is Putative t-SNARE coiled-coil homology domain-containing protein L657, found in Acanthamoeba polyphaga (Amoeba).